Here is a 287-residue protein sequence, read N- to C-terminus: Vesicle-associated protein 4-3 (287 aa).

The segment covering 1–14 (MALTEDKSDSDGRR) has biased composition (basic and acidic residues). The segment at 1–45 (MALTEDKSDSDGRRWGKFKLPFRNSNSQAPSASSSSSMATSSSSV) is disordered. Over residues 25–45 (SNSQAPSASSSSSMATSSSSV) the composition is skewed to low complexity. The region spanning 99-221 (RLKLDPSAKL…EEQVMRVVFL (123 aa)) is the MSP domain.

The protein belongs to the VAMP-associated protein (VAP) (TC 9.B.17) family.

Functionally, may play a role in vesicle trafficking. The chain is Vesicle-associated protein 4-3 (PVA43) from Arabidopsis thaliana (Mouse-ear cress).